A 918-amino-acid polypeptide reads, in one-letter code: Chitin synthase C (918 aa).

Positions 1 to 63 are disordered; it reads MSYNRLGDPY…EMPSSDRLAE (63 aa). The segment covering 22–37 has biased composition (low complexity); the sequence is NPSSLSNRSPSPGRPL. 4 helical membrane passes run 562–581, 605–625, 637–657, and 672–692; these read WLNG…YQLW, LFAW…TTYL, VLGV…FVLS, and MVYL…FVTV. Asn712 carries an N-linked (GlcNAc...) asparagine glycan. 3 helical membrane-spanning segments follow: residues 715 to 735, 845 to 865, and 890 to 910; these read FFSI…ASII, VVLV…SSAG, and VVLW…MWFL.

Belongs to the chitin synthase family. Class I subfamily. As to expression, mainly expressed in hyphae and conidiphores. Relatively strongly expressed in young cleistothecia and in mature ascospores, but negligible in Huelle cells.

It is found in the cell membrane. The protein localises to the cell septum. The protein resides in the cell tip. It carries out the reaction [(1-&gt;4)-N-acetyl-beta-D-glucosaminyl](n) + UDP-N-acetyl-alpha-D-glucosamine = [(1-&gt;4)-N-acetyl-beta-D-glucosaminyl](n+1) + UDP + H(+). Its function is as follows. Polymerizes chitin, a structural polymer of the cell wall and septum, by transferring the sugar moiety of UDP-GlcNAc to the non-reducing end of the growing chitin polymer. ChsC and chsA share critical functions in hyphal wall integrity and differentiation. ChsA and chsC share also overlapping roles in septum formation. The sequence is that of Chitin synthase C from Emericella nidulans (strain FGSC A4 / ATCC 38163 / CBS 112.46 / NRRL 194 / M139) (Aspergillus nidulans).